Consider the following 115-residue polypeptide: Large ribosomal subunit protein bL20 (115 aa).

This sequence belongs to the bacterial ribosomal protein bL20 family.

Binds directly to 23S ribosomal RNA and is necessary for the in vitro assembly process of the 50S ribosomal subunit. It is not involved in the protein synthesizing functions of that subunit. In Parasynechococcus marenigrum (strain WH8102), this protein is Large ribosomal subunit protein bL20.